The sequence spans 263 residues: Ribosomal RNA small subunit methyltransferase A (263 aa).

S-adenosyl-L-methionine contacts are provided by asparagine 20, leucine 22, glycine 47, glutamate 68, aspartate 90, and asparagine 111.

The protein belongs to the class I-like SAM-binding methyltransferase superfamily. rRNA adenine N(6)-methyltransferase family. RsmA subfamily.

The protein resides in the cytoplasm. The enzyme catalyses adenosine(1518)/adenosine(1519) in 16S rRNA + 4 S-adenosyl-L-methionine = N(6)-dimethyladenosine(1518)/N(6)-dimethyladenosine(1519) in 16S rRNA + 4 S-adenosyl-L-homocysteine + 4 H(+). Specifically dimethylates two adjacent adenosines (A1518 and A1519) in the loop of a conserved hairpin near the 3'-end of 16S rRNA in the 30S particle. May play a critical role in biogenesis of 30S subunits. This is Ribosomal RNA small subunit methyltransferase A from Chlorobium chlorochromatii (strain CaD3).